Here is a 250-residue protein sequence, read N- to C-terminus: UPF0193 protein EVG1 homolog (250 aa).

The tract at residues 86–110 (ESLRNGEPLPLPEPPRPNTNNDPDK) is disordered.

This sequence belongs to the UPF0193 (EVG1) family.

This chain is UPF0193 protein EVG1 homolog, found in Drosophila melanogaster (Fruit fly).